Reading from the N-terminus, the 596-residue chain is Neuroepithelial cell-transforming gene 1 protein (596 aa).

Position 1 is an N-acetylmethionine (M1). The interval 1–44 (MEPELAAQKQPRPRRRSRRASGLSTEGATGPSADTSGSELDGRC) is disordered. Positions 1-74 (MEPELAAQKQ…LKRKRREKDD (74 aa)) are necessary for nuclear localization. Positions 12 to 19 (RPRRRSRR) match the Nuclear localization signal motif. A phosphoserine mark is found at S21 and S32. The segment covering 22 to 38 (GLSTEGATGPSADTSGS) has biased composition (polar residues). Positions 66–72 (KRKRREK) match the Nuclear localization signal motif. Residues S100, S106, and S122 each carry the phosphoserine modification. Residues 127–146 (GDHRSPASAQKFSSRSTVPT) are disordered. A compositionally biased stretch (polar residues) spans 133 to 145 (ASAQKFSSRSTVP). In terms of domain architecture, DH spans 174–356 (RRQEAIYEMS…QGVLSDINLK (183 aa)). A PH domain is found at 386–501 (VLLCHGELRS…WFNCIRAAIA (116 aa)). At S508 the chain carries Phosphoserine. Residues 562-596 (MAEDSKSLKTHQTQPGIRRARDKALSGGKRKETLV) form a disordered region.

Interacts with RHOA in its GTP- and GDP-bound states, and with CDC42 in its GTP-bound state. Interacts with the PDZ 1 domain of BAIAP1. As to expression, widely expressed.

The protein localises to the cytoplasm. It localises to the nucleus. Its function is as follows. Acts as a guanine nucleotide exchange factor (GEF) for RhoA GTPase. May be involved in activation of the SAPK/JNK pathway Stimulates genotoxic stress-induced RHOB activity in breast cancer cells leading to their cell death. In Homo sapiens (Human), this protein is Neuroepithelial cell-transforming gene 1 protein (NET1).